Reading from the N-terminus, the 189-residue chain is UPF0301 protein RAF_ORF0041 (189 aa).

This sequence belongs to the UPF0301 (AlgH) family.

The sequence is that of UPF0301 protein RAF_ORF0041 from Rickettsia africae (strain ESF-5).